The primary structure comprises 156 residues: 6,7-dimethyl-8-ribityllumazine synthase (156 aa).

5-amino-6-(D-ribitylamino)uracil contacts are provided by residues tryptophan 28, 60–62, and 82–84; these read SFE and VVV. (2S)-2-hydroxy-3-oxobutyl phosphate is bound at residue 87 to 88; that stretch reads GT. Histidine 90 acts as the Proton donor in catalysis. Phenylalanine 115 provides a ligand contact to 5-amino-6-(D-ribitylamino)uracil. Arginine 129 provides a ligand contact to (2S)-2-hydroxy-3-oxobutyl phosphate.

It belongs to the DMRL synthase family.

The catalysed reaction is (2S)-2-hydroxy-3-oxobutyl phosphate + 5-amino-6-(D-ribitylamino)uracil = 6,7-dimethyl-8-(1-D-ribityl)lumazine + phosphate + 2 H2O + H(+). The protein operates within cofactor biosynthesis; riboflavin biosynthesis; riboflavin from 2-hydroxy-3-oxobutyl phosphate and 5-amino-6-(D-ribitylamino)uracil: step 1/2. Its function is as follows. Catalyzes the formation of 6,7-dimethyl-8-ribityllumazine by condensation of 5-amino-6-(D-ribitylamino)uracil with 3,4-dihydroxy-2-butanone 4-phosphate. This is the penultimate step in the biosynthesis of riboflavin. This chain is 6,7-dimethyl-8-ribityllumazine synthase, found in Kocuria rhizophila (strain ATCC 9341 / DSM 348 / NBRC 103217 / DC2201).